A 194-amino-acid polypeptide reads, in one-letter code: Ribosome maturation factor RimM (194 aa).

Positions 92–190 (DDGYYDHELI…ALVVTPPEGL (99 aa)) constitute a PRC barrel domain.

The protein belongs to the RimM family. As to quaternary structure, binds ribosomal protein uS19.

It localises to the cytoplasm. An accessory protein needed during the final step in the assembly of 30S ribosomal subunit, possibly for assembly of the head region. Essential for efficient processing of 16S rRNA. May be needed both before and after RbfA during the maturation of 16S rRNA. It has affinity for free ribosomal 30S subunits but not for 70S ribosomes. This Corynebacterium urealyticum (strain ATCC 43042 / DSM 7109) protein is Ribosome maturation factor RimM.